A 337-amino-acid polypeptide reads, in one-letter code: Ornithine carbamoyltransferase (337 aa).

Carbamoyl phosphate-binding positions include 56–59 (STRT), glutamine 83, arginine 107, and 134–137 (HPTQ). Residues asparagine 168, aspartate 232, and 236–237 (SM) each bind L-ornithine. Carbamoyl phosphate is bound by residues 274–275 (CL) and arginine 320.

This sequence belongs to the aspartate/ornithine carbamoyltransferase superfamily. OTCase family.

Its subcellular location is the cytoplasm. It catalyses the reaction carbamoyl phosphate + L-ornithine = L-citrulline + phosphate + H(+). Its pathway is amino-acid biosynthesis; L-arginine biosynthesis; L-arginine from L-ornithine and carbamoyl phosphate: step 1/3. Its function is as follows. Reversibly catalyzes the transfer of the carbamoyl group from carbamoyl phosphate (CP) to the N(epsilon) atom of ornithine (ORN) to produce L-citrulline. The chain is Ornithine carbamoyltransferase (argI) from Shigella flexneri.